The following is a 184-amino-acid chain: ATP synthase subunit b, chloroplastic (184 aa).

Residues 27 to 49 (LATNPINLSVVFGVLIFFGKGVL) form a helical membrane-spanning segment.

The protein belongs to the ATPase B chain family. In terms of assembly, F-type ATPases have 2 components, F(1) - the catalytic core - and F(0) - the membrane proton channel. F(1) has five subunits: alpha(3), beta(3), gamma(1), delta(1), epsilon(1). F(0) has four main subunits: a(1), b(1), b'(1) and c(10-14). The alpha and beta chains form an alternating ring which encloses part of the gamma chain. F(1) is attached to F(0) by a central stalk formed by the gamma and epsilon chains, while a peripheral stalk is formed by the delta, b and b' chains.

It is found in the plastid. The protein resides in the chloroplast thylakoid membrane. In terms of biological role, f(1)F(0) ATP synthase produces ATP from ADP in the presence of a proton or sodium gradient. F-type ATPases consist of two structural domains, F(1) containing the extramembraneous catalytic core and F(0) containing the membrane proton channel, linked together by a central stalk and a peripheral stalk. During catalysis, ATP synthesis in the catalytic domain of F(1) is coupled via a rotary mechanism of the central stalk subunits to proton translocation. Functionally, component of the F(0) channel, it forms part of the peripheral stalk, linking F(1) to F(0). The protein is ATP synthase subunit b, chloroplastic of Nasturtium officinale (Watercress).